The primary structure comprises 116 residues: Ribosome-binding factor A (116 aa).

It belongs to the RbfA family. As to quaternary structure, monomer. Binds 30S ribosomal subunits, but not 50S ribosomal subunits or 70S ribosomes.

It is found in the cytoplasm. Its function is as follows. One of several proteins that assist in the late maturation steps of the functional core of the 30S ribosomal subunit. Associates with free 30S ribosomal subunits (but not with 30S subunits that are part of 70S ribosomes or polysomes). Required for efficient processing of 16S rRNA. May interact with the 5'-terminal helix region of 16S rRNA. This Ureaplasma urealyticum serovar 10 (strain ATCC 33699 / Western) protein is Ribosome-binding factor A.